Here is a 328-residue protein sequence, read N- to C-terminus: Beta-ketoacyl-[acyl-carrier-protein] synthase III (328 aa).

Residues C122 and H255 contribute to the active site. An ACP-binding region spans residues 256-260 (QANIR). The active site involves N285.

It belongs to the thiolase-like superfamily. FabH family. Homodimer.

It localises to the cytoplasm. The catalysed reaction is malonyl-[ACP] + acetyl-CoA + H(+) = 3-oxobutanoyl-[ACP] + CO2 + CoA. It functions in the pathway lipid metabolism; fatty acid biosynthesis. Functionally, catalyzes the condensation reaction of fatty acid synthesis by the addition to an acyl acceptor of two carbons from malonyl-ACP. Catalyzes the first condensation reaction which initiates fatty acid synthesis and may therefore play a role in governing the total rate of fatty acid production. Possesses both acetoacetyl-ACP synthase and acetyl transacylase activities. Its substrate specificity determines the biosynthesis of branched-chain and/or straight-chain of fatty acids. The polypeptide is Beta-ketoacyl-[acyl-carrier-protein] synthase III (Janthinobacterium sp. (strain Marseille) (Minibacterium massiliensis)).